The primary structure comprises 990 residues: Sister chromatid cohesion protein PDS5 homolog E (990 aa).

5 HEAT repeats span residues 31 to 57 (DATL…SVQK), 58 to 96 (ALHP…ITAP), 153 to 190 (DLVL…DESE), 191 to 228 (EVPM…SCTC), and 232 to 269 (PCIM…HNDV). A disordered region spans residues 262 to 565 (TTQAHNDVKP…AGEEVESNTN (304 aa)). Residues 267-281 (NDVKPKDNEADEKIS) show a composition bias toward basic and acidic residues. Over residues 302 to 314 (KGTRSKRSARGGT) the composition is skewed to basic residues. Composition is skewed to polar residues over residues 328-342 (EGLS…ASGS) and 394-410 (VGQT…SSGR). 3 stretches are compositionally biased toward basic and acidic residues: residues 421 to 430 (TKMEETDHDV), 448 to 477 (PAKE…EKAD), and 503 to 512 (VHSDAKKKNS). Residues 458 to 465 (VKKHEDGI) carry the Nuclear localization signal 1 motif. Short sequence motifs (nuclear localization signal) lie at residues 539–546 (TKKSEQAP) and 583–590 (DKKFYEGV). Residues 653-966 (KKRKIVSKNV…VGNEAEEDDQ (314 aa)) are disordered. The span at 662 to 673 (VEPSSSPEVRSS) shows a compositional bias: low complexity. 2 short sequence motifs (nuclear localization signal) span residues 677–684 (MKKKDSVT) and 715–722 (LKKLNGEP). A compositionally biased stretch (basic residues) spans 727–742 (GRTGKKQKVTQAMHRK). A compositionally biased stretch (acidic residues) spans 746–760 (DCDEQEDLETKDEED). 3 stretches are compositionally biased toward basic and acidic residues: residues 761–810 (SLKL…KTNG), 819–890 (TDGK…KETN), and 898–947 (EEQK…DKET).

This sequence belongs to the PDS5 family. In terms of assembly, interacts with the cohesin complex.

The protein resides in the nucleus. Functionally, cohesin cofactor dispensable during the meiotic division but playing an important role in DNA repair by homologous recombination (HR) probably by helping SMC5/SMC6 complex. Regulator of sister chromatid cohesion in mitosis which may stabilize cohesin complex association with chromatin. May couple sister chromatid cohesion during mitosis to DNA replication. Cohesion ensures that chromosome partitioning is accurate in both meiotic and mitotic cells and plays an important role in DNA repair. In Arabidopsis thaliana (Mouse-ear cress), this protein is Sister chromatid cohesion protein PDS5 homolog E.